The chain runs to 112 residues: Large ribosomal subunit protein eL30 (112 aa).

Belongs to the eukaryotic ribosomal protein eL30 family.

The protein is Large ribosomal subunit protein eL30 (RPL30) of Zea mays (Maize).